A 109-amino-acid polypeptide reads, in one-letter code: Nucleoid-associated protein ASA_2087 (109 aa).

Disordered stretches follow at residues 1–23 (MFGK…RMQK) and 87–109 (QSKS…KLPF). Over residues 11–23 (MKQAQQMQERMQK) the composition is skewed to low complexity.

The protein belongs to the YbaB/EbfC family. As to quaternary structure, homodimer.

It localises to the cytoplasm. Its subcellular location is the nucleoid. Binds to DNA and alters its conformation. May be involved in regulation of gene expression, nucleoid organization and DNA protection. This chain is Nucleoid-associated protein ASA_2087, found in Aeromonas salmonicida (strain A449).